The following is a 216-amino-acid chain: uncharacterized protein (216 aa).

One can recognise an N-acetyltransferase domain in the interval 1-216; that stretch reads MVVKIVEAYE…DVTFLKLKLK (216 aa).

It belongs to the acetyltransferase family.

This is an uncharacterized protein from Dictyostelium discoideum (Social amoeba).